Here is a 526-residue protein sequence, read N- to C-terminus: Peptide chain release factor 3 (526 aa).

A tr-type G domain is found at 9–277 (NKRRTFAIIS…DFVEYAPGPQ (269 aa)). Residues 18 to 25 (SHPDAGKT), 86 to 90 (DTPGH), and 140 to 143 (NKLD) contribute to the GTP site.

The protein belongs to the TRAFAC class translation factor GTPase superfamily. Classic translation factor GTPase family. PrfC subfamily.

The protein localises to the cytoplasm. In terms of biological role, increases the formation of ribosomal termination complexes and stimulates activities of RF-1 and RF-2. It binds guanine nucleotides and has strong preference for UGA stop codons. It may interact directly with the ribosome. The stimulation of RF-1 and RF-2 is significantly reduced by GTP and GDP, but not by GMP. This Legionella pneumophila (strain Lens) protein is Peptide chain release factor 3.